Here is a 359-residue protein sequence, read N- to C-terminus: Protein Wnt-2 (359 aa).

Residues 1–25 form the signal peptide; the sequence is MNAPLAGIWPWLPLLWAWLVPEVSS. 11 disulfides stabilise this stretch: cysteine 75/cysteine 86, cysteine 126/cysteine 134, cysteine 136/cysteine 156, cysteine 205/cysteine 219, cysteine 207/cysteine 214, cysteine 277/cysteine 308, cysteine 293/cysteine 303, cysteine 307/cysteine 347, cysteine 323/cysteine 338, cysteine 325/cysteine 335, and cysteine 330/cysteine 331. Serine 211 carries O-palmitoleoyl serine; by PORCN lipidation. The N-linked (GlcNAc...) asparagine glycan is linked to asparagine 294.

This sequence belongs to the Wnt family. Post-translationally, palmitoleoylation is required for efficient binding to frizzled receptors. Depalmitoleoylation leads to Wnt signaling pathway inhibition.

It localises to the secreted. The protein resides in the extracellular space. Its subcellular location is the extracellular matrix. In terms of biological role, ligand for members of the frizzled family of seven transmembrane receptors. Probable developmental protein. May be a signaling molecule which affects the development of discrete regions of tissues. Is likely to signal over only few cell diameters. This Echinops telfairi (Lesser hedgehog tenrec) protein is Protein Wnt-2 (WNT2).